Reading from the N-terminus, the 150-residue chain is Histone H3-like centromeric protein A (150 aa).

Residues 1–56 are disordered; sequence MRPGSTPASRRKSRPPRRVSPPLPTTSTRSPGRPSAPEQRKAPRATPKKRFRPGTR. Residues 25-37 show a composition bias toward low complexity; sequence TTSTRSPGRPSAP. The segment covering 42 to 53 has biased composition (basic residues); that stretch reads APRATPKKRFRP. The interval 53-150 is H3-like; that stretch reads PGTRALMEIR…RIRGVTEGLG (98 aa).

The protein belongs to the histone H3 family. Component of centromeric nucleosomes, where DNA is wrapped around a histone octamer core. The octamer contains two molecules each of H2A, H2B, CENPA and H4 assembled in one CENPA-H4 heterotetramer and two H2A-H2B heterodimers. CENPA modulates the DNA-binding characteristics of nucleosomes so that protruding DNA ends have higher flexibility than in nucleosomes containing conventional histone H3.

The protein localises to the nucleus. The protein resides in the chromosome. It localises to the centromere. Functionally, histone H3-like nucleosomal protein that is specifically found in centromeric nucleosomes. Replaces conventional H3 in the nucleosome core of centromeric chromatin that serves as an assembly site for the inner kinetochore. The presence of CENPA subtly modifies the nucleosome structure and the way DNA is wrapped around the nucleosome and gives rise to protruding DNA ends that are less well-ordered and rigid compared to nucleosomes containing histone H3. May serve as an epigenetic mark that propagates centromere identity through replication and cell division. Required for recruitment and assembly of kinetochore proteins, and as a consequence required for progress through mitosis, chromosome segregation and cytokinesis. The polypeptide is Histone H3-like centromeric protein A (cenpa) (Xenopus tropicalis (Western clawed frog)).